We begin with the raw amino-acid sequence, 210 residues long: Ribosomal RNA large subunit methyltransferase E (210 aa).

The S-adenosyl-L-methionine site is built by glycine 61, tryptophan 63, aspartate 81, aspartate 97, and aspartate 122. Lysine 162 (proton acceptor) is an active-site residue.

Belongs to the class I-like SAM-binding methyltransferase superfamily. RNA methyltransferase RlmE family.

The protein localises to the cytoplasm. The enzyme catalyses uridine(2552) in 23S rRNA + S-adenosyl-L-methionine = 2'-O-methyluridine(2552) in 23S rRNA + S-adenosyl-L-homocysteine + H(+). Its function is as follows. Specifically methylates the uridine in position 2552 of 23S rRNA at the 2'-O position of the ribose in the fully assembled 50S ribosomal subunit. This Xanthomonas campestris pv. campestris (strain 8004) protein is Ribosomal RNA large subunit methyltransferase E.